The chain runs to 233 residues: 2,3,4,5-tetrahydropyridine-2,6-dicarboxylate N-acetyltransferase (233 aa).

It belongs to the transferase hexapeptide repeat family. DapH subfamily.

The catalysed reaction is (S)-2,3,4,5-tetrahydrodipicolinate + acetyl-CoA + H2O = L-2-acetamido-6-oxoheptanedioate + CoA. It functions in the pathway amino-acid biosynthesis; L-lysine biosynthesis via DAP pathway; LL-2,6-diaminopimelate from (S)-tetrahydrodipicolinate (acetylase route): step 1/3. In terms of biological role, catalyzes the transfer of an acetyl group from acetyl-CoA to tetrahydrodipicolinate. The chain is 2,3,4,5-tetrahydropyridine-2,6-dicarboxylate N-acetyltransferase from Thermotoga petrophila (strain ATCC BAA-488 / DSM 13995 / JCM 10881 / RKU-1).